The sequence spans 243 residues: Cell surface glycoprotein CD200 receptor 1-B (243 aa).

The Cytoplasmic portion of the chain corresponds to Met-1–Thr-29. The chain crosses the membrane as a helical; Signal-anchor for type II membrane protein span at residues Ala-30–Ile-47. Residues Ile-47 to Thr-146 form the Ig-like V-type domain. The Lumenal portion of the chain corresponds to Ser-48–Pro-243. 2 disulfides stabilise this stretch: Cys-62–Cys-130 and Cys-165–Cys-214. Asn-64, Asn-67, Asn-127, Asn-193, Asn-222, and Asn-228 each carry an N-linked (GlcNAc...) asparagine glycan. The region spanning His-144–Asn-228 is the Ig-like C2-type domain.

Belongs to the CD200R family. As to expression, expressed in peripheral blood lymphocytes (PBL) and peripheral blood mononuclear cells (PBMC).

The protein localises to the membrane. In Gallus gallus (Chicken), this protein is Cell surface glycoprotein CD200 receptor 1-B (CD200R1B).